We begin with the raw amino-acid sequence, 348 residues long: Rhodopsin (348 aa).

Met-1 is subject to N-acetylmethionine. Over 1 to 36 (MNGTEGPDFYIPMSNQTGVVRSPFEYPQYYLAEPWQ) the chain is Extracellular. N-linked (GlcNAc...) asparagine glycosylation is found at Asn-2 and Asn-15. Residues 37–61 (FSMLAAYMFLLIVLGFPINFLTLYV) traverse the membrane as a helical segment. Residues 62–73 (TVQHKKLRTPLN) are Cytoplasmic-facing. A helical transmembrane segment spans residues 74–96 (YILLNLAVADLFMVLGGFTTTLY). Topologically, residues 97 to 110 (TSLHGYFVFGPTGC) are extracellular. A disulfide bond links Cys-110 and Cys-187. Residues 111–133 (NVEGFFATLGGEIALWSLVVLAI) form a helical membrane-spanning segment. A 'Ionic lock' involved in activated form stabilization motif is present at residues 134–136 (ERY). At 134 to 152 (ERYVVVCKPMSNFRFGENH) the chain is on the cytoplasmic side. The chain crosses the membrane as a helical span at residues 153 to 173 (AIMGVAFTWIMALACAAPPLV). Residues 174 to 202 (GWSRYIPEGMQCSCGIDYYTLKPEVNNES) are Extracellular-facing. Residue Glu-201 coordinates Zn(2+). Residues 203 to 224 (FVIYMFVVHFTIPLIIIFFCYG) form a helical membrane-spanning segment. The Cytoplasmic segment spans residues 225-252 (QLVFTVKEAAAQQQESATTQKAEKEVTR). The helical transmembrane segment at 253–274 (MVIIMVIAFLICWVPYASVAFY) threads the bilayer. The Extracellular segment spans residues 275 to 286 (IFTHQGSNFGPI). Gln-279 provides a ligand contact to Zn(2+). The chain crosses the membrane as a helical span at residues 287-308 (FMTIPAFFAKSSSIYNPVIYIM). The residue at position 296 (Lys-296) is an N6-(retinylidene)lysine. Topologically, residues 309–348 (MNKQFRNCMLTTICCGKNPLGDDEASATASKTETSQVAPA) are cytoplasmic. Residues Cys-322 and Cys-323 are each lipidated (S-palmitoyl cysteine). An interaction with SAG region spans residues 330 to 348 (DDEASATASKTETSQVAPA). Ser-334 bears the Phosphoserine mark. Position 336 is a phosphothreonine (Thr-336). Ser-338 carries the post-translational modification Phosphoserine. Phosphothreonine is present on residues Thr-340 and Thr-342. A Phosphoserine modification is found at Ser-343.

This sequence belongs to the G-protein coupled receptor 1 family. Opsin subfamily. In terms of assembly, homodimer. May form a complex composed of RHO, GRK1 and RCVRN in a Ca(2+)-dependent manner; RCVRN prevents the interaction between GRK1 and RHO. Interacts with GRK1. Interacts (phosphorylated form) with SAG. Interacts with GNAT1. Interacts with GNAT3. SAG and G-proteins compete for a common binding site. Interacts with PRCD; the interaction promotes PRCD stability. Forms a complex with ASAP1 and ARF4. Forms a complex with ASAP1, RAB11A, Rabin8/RAB3IP, ARF4 and RAB11FIP3; the complex regulates Golgi-to-cilia rhodopsin/RHO transport in photoreceptors. Phosphorylated on some or all of the serine and threonine residues present in the C-terminal region. Post-translationally, contains one covalently linked retinal chromophore. Upon light absorption, the covalently bound 11-cis-retinal is converted to all-trans-retinal. After hydrolysis of the Schiff base and release of the covalently bound all-trans-retinal, active rhodopsin is regenerated by binding of a fresh molecule of 11-cis-retinal.

The protein resides in the membrane. Its subcellular location is the cell projection. It localises to the cilium. It is found in the photoreceptor outer segment. In terms of biological role, photoreceptor required for image-forming vision at low light intensity. Required for photoreceptor cell viability after birth. Light-induced isomerization of 11-cis to all-trans retinal triggers a conformational change that activates signaling via G-proteins. Subsequent receptor phosphorylation mediates displacement of the bound G-protein alpha subunit by the arrestin SAG and terminates signaling. This chain is Rhodopsin (RHO), found in Oryctolagus cuniculus (Rabbit).